The primary structure comprises 65 residues: Toxin Co52 (65 aa).

Residues 2–65 (EDGYLVDKTG…PTWPLPNKTC (64 aa)) enclose the LCN-type CS-alpha/beta domain. Cystine bridges form between Cys-12-Cys-65, Cys-16-Cys-41, Cys-25-Cys-46, and Cys-29-Cys-48.

As to expression, expressed by the venom gland.

It is found in the secreted. Beta toxins bind voltage-independently at site-4 of sodium channels (Nav) and shift the voltage of activation toward more negative potentials thereby affecting sodium channel activation and promoting spontaneous and repetitive firing. Not toxic to mice, chicks, crickets or woodlice (at 5 ug). The polypeptide is Toxin Co52 (Centruroides ornatus (Scorpion)).